We begin with the raw amino-acid sequence, 404 residues long: Acetate kinase (404 aa).

Residue Asn-7 participates in Mg(2+) binding. Lys-14 is a binding site for ATP. Substrate is bound at residue Arg-95. The active-site Proton donor/acceptor is Asp-152. ATP is bound by residues His-212–Gly-216, Asp-286–Arg-288, and Gly-334–Asn-338. Glu-388 lines the Mg(2+) pocket.

Belongs to the acetokinase family. In terms of assembly, homodimer. Requires Mg(2+) as cofactor. Mn(2+) serves as cofactor.

The protein resides in the cytoplasm. The catalysed reaction is acetate + ATP = acetyl phosphate + ADP. The protein operates within metabolic intermediate biosynthesis; acetyl-CoA biosynthesis; acetyl-CoA from acetate: step 1/2. In terms of biological role, catalyzes the formation of acetyl phosphate from acetate and ATP. Can also catalyze the reverse reaction. In Nitratidesulfovibrio vulgaris (strain DSM 19637 / Miyazaki F) (Desulfovibrio vulgaris), this protein is Acetate kinase.